The sequence spans 417 residues: Gamma-glutamyl phosphate reductase (417 aa).

It belongs to the gamma-glutamyl phosphate reductase family.

The protein localises to the cytoplasm. The enzyme catalyses L-glutamate 5-semialdehyde + phosphate + NADP(+) = L-glutamyl 5-phosphate + NADPH + H(+). The protein operates within amino-acid biosynthesis; L-proline biosynthesis; L-glutamate 5-semialdehyde from L-glutamate: step 2/2. Its function is as follows. Catalyzes the NADPH-dependent reduction of L-glutamate 5-phosphate into L-glutamate 5-semialdehyde and phosphate. The product spontaneously undergoes cyclization to form 1-pyrroline-5-carboxylate. The polypeptide is Gamma-glutamyl phosphate reductase (Escherichia coli O127:H6 (strain E2348/69 / EPEC)).